Consider the following 243-residue polypeptide: R-spondin-2 (243 aa).

Positions 1–21 (MQFQLFSFVLIILNCVDYSHC) are cleaved as a signal peptide. Disulfide bonds link Cys40–Cys46, Cys43–Cys52, Cys55–Cys74, Cys78–Cys93, Cys96–Cys104, Cys101–Cys110, Cys113–Cys124, Cys128–Cys141, Cys145–Cys187, Cys156–Cys163, and Cys196–Cys203. The stretch at 90-134 (MNRCSRCRIENCDSCFSRDFCIKCKSGFYSHKGQCFEECPEGFAP) is one FU repeat. The TSP type-1 domain maps to 144-204 (GCEVGPWSEW…RCKMAMRHCP (61 aa)). The N-linked (GlcNAc...) asparagine glycan is linked to Asn160. The disordered stretch occupies residues 202-243 (HCPGGTRTTKKKDKKNKKKKKKLLERAQEQHSVVLATDRSSQ). Over residues 209–224 (TTKKKDKKNKKKKKKL) the composition is skewed to basic residues.

The protein belongs to the R-spondin family. Binds heparin.

The protein localises to the secreted. Functionally, activator of the canonical Wnt signaling pathway by acting as a ligand for lgr4-6 receptors. Upon binding to lgr4-6 (lgr4, lgr5 or lgr6), lgr4-6 associate with phosphorylated lrp6 and frizzled receptors that are activated by extracellular Wnt receptors, triggering the canonical Wnt signaling pathway to increase expression of target genes. Acts both in the canonical. Wnt/beta-catenin-dependent pathway and in non-canonical Wnt signaling pathway. Activates neural markers and promotes muscle formation. Overexpression blocks activin, nodal and BMP4 signaling, suggesting that it may negatively regulate the TGF-beta pathway. During embryonic development, plays a crucial role in limb specification, amplifying the Wnt signaling pathway independently of LGR4-6 receptors, possibly by acting as a direct antagonistic ligand to RNF43 and ZNRF3, hence governing the number of limbs an embryo should form. This Xenopus tropicalis (Western clawed frog) protein is R-spondin-2 (rspo2).